An 831-amino-acid polypeptide reads, in one-letter code: Cysteine--tRNA ligase, cytoplasmic (831 aa).

Residue Ala-2 is modified to N-acetylalanine. Ser-102 is subject to Phosphoserine. Cys-138 provides a ligand contact to Zn(2+). Gly-139 is an L-cysteine binding site. The short motif at 140 to 150 (PTVYDASHMGH) is the 'HIGH' region element. Thr-179 is an L-cysteine binding site. Positions 184-187 (KIIR) match the 'KIIK' region motif. A phosphoserine mark is found at Ser-388 and Ser-390. Residues Cys-431, His-456, and Glu-460 each contribute to the Zn(2+) site. Residue His-456 participates in L-cysteine binding. Residues 489 to 493 (KMSKS) carry the 'KMSKS' region motif. Residue Lys-492 participates in ATP binding. A compositionally biased stretch (basic and acidic residues) spans 736–762 (GKKRAEEEKRRKKEEAARKKQEQEAAK). The interval 736 to 766 (GKKRAEEEKRRKKEEAARKKQEQEAAKLAKM) is disordered. Phosphoserine is present on Ser-829.

It belongs to the class-I aminoacyl-tRNA synthetase family. Homodimer. Requires Zn(2+) as cofactor.

It localises to the cytoplasm. The enzyme catalyses tRNA(Cys) + L-cysteine + ATP = L-cysteinyl-tRNA(Cys) + AMP + diphosphate. Its function is as follows. Catalyzes the ATP-dependent ligation of cysteine to tRNA(Cys). This is Cysteine--tRNA ligase, cytoplasmic (Cars1) from Mus musculus (Mouse).